Reading from the N-terminus, the 450-residue chain is Phosphoglucosamine mutase (450 aa).

The Phosphoserine intermediate role is filled by serine 102. Mg(2+) is bound by residues serine 102, aspartate 243, aspartate 245, and aspartate 247. At serine 102 the chain carries Phosphoserine.

It belongs to the phosphohexose mutase family. The cofactor is Mg(2+). Activated by phosphorylation.

It carries out the reaction alpha-D-glucosamine 1-phosphate = D-glucosamine 6-phosphate. Catalyzes the conversion of glucosamine-6-phosphate to glucosamine-1-phosphate. This chain is Phosphoglucosamine mutase, found in Allorhizobium ampelinum (strain ATCC BAA-846 / DSM 112012 / S4) (Agrobacterium vitis (strain S4)).